A 425-amino-acid chain; its full sequence is Protein cab-1 (425 aa).

Positions 1–11 (MRYTFSDEKKA) are enriched in basic and acidic residues. Disordered stretches follow at residues 1–20 (MRYT…SRAK) and 214–251 (LKKT…VPQK). An AEX-3-binding region spans residues 205–424 (ENEIAKESEL…EVCNPNFAAQ (220 aa)). Residues 300 to 320 (LLLLAVGTVMCVGLIGTVAGG) traverse the membrane as a helical segment. A disordered region spans residues 334-355 (DDGEYAPYAGTGPGFRKNKGNK).

This sequence belongs to the NPDC1/cab-1 family. In terms of assembly, binds to the RAB3 GDP/GTP exchange factor aex-3. Expressed in a variety of neurons.

Its subcellular location is the membrane. This is Protein cab-1 (cab-1) from Caenorhabditis elegans.